Here is a 303-residue protein sequence, read N- to C-terminus: Oxygen-dependent coproporphyrinogen-III oxidase (303 aa).

A substrate-binding site is contributed by Ser93. Residues His97 and His107 each coordinate a divalent metal cation. The active-site Proton donor is the His107. Asn109–Arg111 contributes to the substrate binding site. A divalent metal cation-binding residues include His149 and His179. Positions Tyr244–Arg279 are important for dimerization. Residue Gly262–Arg264 coordinates substrate.

Belongs to the aerobic coproporphyrinogen-III oxidase family. Homodimer. Requires a divalent metal cation as cofactor.

The protein localises to the cytoplasm. It catalyses the reaction coproporphyrinogen III + O2 + 2 H(+) = protoporphyrinogen IX + 2 CO2 + 2 H2O. The protein operates within porphyrin-containing compound metabolism; protoporphyrin-IX biosynthesis; protoporphyrinogen-IX from coproporphyrinogen-III (O2 route): step 1/1. Its function is as follows. Involved in the heme biosynthesis. Catalyzes the aerobic oxidative decarboxylation of propionate groups of rings A and B of coproporphyrinogen-III to yield the vinyl groups in protoporphyrinogen-IX. The polypeptide is Oxygen-dependent coproporphyrinogen-III oxidase (Bordetella parapertussis (strain 12822 / ATCC BAA-587 / NCTC 13253)).